A 581-amino-acid chain; its full sequence is Solute carrier family 15 member 3 (581 aa).

Positions Met-1–Gly-14 are enriched in basic and acidic residues. Residues Met-1 to Gly-26 are disordered. Residues Val-38–Leu-58 traverse the membrane as a helical segment. Residues Asn-61 and Asn-66 are each glycosylated (N-linked (GlcNAc...) asparagine). 3 helical membrane passes run Ala-76–Val-96, Ala-103–Phe-123, and Pro-155–Val-175. Asn-178 is a glycosylation site (N-linked (GlcNAc...) asparagine). The helical transmembrane segment at Asn-200–Ile-220 threads the bilayer. Asn-223 is a glycosylation site (N-linked (GlcNAc...) asparagine). The next 2 membrane-spanning stretches (helical) occupy residues Ile-232–Ile-252 and Phe-310–Tyr-330. An N-linked (GlcNAc...) asparagine glycan is attached at Asn-356. 2 consecutive transmembrane segments (helical) span residues Thr-369–Leu-389 and Met-411–Glu-431. Asn-439 carries N-linked (GlcNAc...) asparagine glycosylation. The next 3 membrane-spanning stretches (helical) occupy residues Ile-458–Pro-478, Gly-497–Leu-517, and Leu-540–Ala-560.

This sequence belongs to the major facilitator superfamily. Proton-dependent oligopeptide transporter (POT/PTR) (TC 2.A.17) family.

Its subcellular location is the lysosome membrane. The protein resides in the endosome membrane. The enzyme catalyses glycylglycylglycine(out) + n H(+)(out) = glycylglycylglycine(in) + n H(+)(in). The catalysed reaction is carnosine(out) + n H(+)(out) = carnosine(in) + n H(+)(in). It catalyses the reaction L-histidine(out) + n H(+)(out) = L-histidine(in) + n H(+)(in). It carries out the reaction N-acetyl-D-muramoyl-L-alanyl-D-isoglutamine(out) + n H(+)(out) = N-acetyl-D-muramoyl-L-alanyl-D-isoglutamine(in) + n H(+)(in). In terms of biological role, proton-coupled amino-acid transporter that transports free histidine and certain di- and tripeptides, and is involved in innate immune response. Also able to transport carnosine. Involved in the detection of microbial pathogens by toll-like receptors (TLRs) and NOD-like receptors (NLRs), probably by mediating transport of bacterial peptidoglycans across the endolysosomal membrane: catalyzes the transport of certain bacterial peptidoglycans, such as muramyl dipeptide (MDP), the NOD2 ligand. This chain is Solute carrier family 15 member 3, found in Homo sapiens (Human).